Consider the following 353-residue polypeptide: Ribosomal RNA small subunit methyltransferase H (353 aa).

Residues 39–41, aspartate 58, phenylalanine 90, aspartate 108, and glutamine 115 each bind S-adenosyl-L-methionine; that span reads AGH. The disordered stretch occupies residues 334–353; the sequence is SEDGVRGAHGHRRRTQARRG. Basic residues predominate over residues 341–353; that stretch reads AHGHRRRTQARRG.

The protein belongs to the methyltransferase superfamily. RsmH family.

The protein resides in the cytoplasm. It catalyses the reaction cytidine(1402) in 16S rRNA + S-adenosyl-L-methionine = N(4)-methylcytidine(1402) in 16S rRNA + S-adenosyl-L-homocysteine + H(+). In terms of biological role, specifically methylates the N4 position of cytidine in position 1402 (C1402) of 16S rRNA. In Bifidobacterium animalis subsp. lactis (strain AD011), this protein is Ribosomal RNA small subunit methyltransferase H.